Here is a 950-residue protein sequence, read N- to C-terminus: Bifunctional glutamine synthetase adenylyltransferase/adenylyl-removing enzyme (950 aa).

Residues M1–E443 form an adenylyl removase region. The tract at residues E450 to I950 is adenylyl transferase.

Belongs to the GlnE family. The cofactor is Mg(2+).

The enzyme catalyses [glutamine synthetase]-O(4)-(5'-adenylyl)-L-tyrosine + phosphate = [glutamine synthetase]-L-tyrosine + ADP. It carries out the reaction [glutamine synthetase]-L-tyrosine + ATP = [glutamine synthetase]-O(4)-(5'-adenylyl)-L-tyrosine + diphosphate. Functionally, involved in the regulation of glutamine synthetase GlnA, a key enzyme in the process to assimilate ammonia. When cellular nitrogen levels are high, the C-terminal adenylyl transferase (AT) inactivates GlnA by covalent transfer of an adenylyl group from ATP to specific tyrosine residue of GlnA, thus reducing its activity. Conversely, when nitrogen levels are low, the N-terminal adenylyl removase (AR) activates GlnA by removing the adenylyl group by phosphorolysis, increasing its activity. The regulatory region of GlnE binds the signal transduction protein PII (GlnB) which indicates the nitrogen status of the cell. The sequence is that of Bifunctional glutamine synthetase adenylyltransferase/adenylyl-removing enzyme from Vibrio vulnificus (strain CMCP6).